Consider the following 634-residue polypeptide: DNA-directed RNA polymerase subunit gamma (634 aa).

C74, C76, C89, and C92 together coordinate Zn(2+). Residues D471, D473, and D475 each coordinate Mg(2+).

Belongs to the RNA polymerase beta' chain family. RpoC1 subfamily. In terms of assembly, in cyanobacteria the RNAP catalytic core is composed of 2 alpha, 1 beta, 1 beta', 1 gamma and 1 omega subunit. When a sigma factor is associated with the core the holoenzyme is formed, which can initiate transcription. Requires Mg(2+) as cofactor. It depends on Zn(2+) as a cofactor.

The enzyme catalyses RNA(n) + a ribonucleoside 5'-triphosphate = RNA(n+1) + diphosphate. Its function is as follows. DNA-dependent RNA polymerase catalyzes the transcription of DNA into RNA using the four ribonucleoside triphosphates as substrates. This chain is DNA-directed RNA polymerase subunit gamma, found in Synechococcus sp. (strain WH7803).